Reading from the N-terminus, the 299-residue chain is UDP-N-acetylenolpyruvoylglucosamine reductase (299 aa).

The 162-residue stretch at valine 31–glycine 192 folds into the FAD-binding PCMH-type domain. Arginine 172 is a catalytic residue. The Proton donor role is filled by serine 221. Glutamate 291 is an active-site residue.

This sequence belongs to the MurB family. Requires FAD as cofactor.

Its subcellular location is the cytoplasm. It carries out the reaction UDP-N-acetyl-alpha-D-muramate + NADP(+) = UDP-N-acetyl-3-O-(1-carboxyvinyl)-alpha-D-glucosamine + NADPH + H(+). The protein operates within cell wall biogenesis; peptidoglycan biosynthesis. Its function is as follows. Cell wall formation. The polypeptide is UDP-N-acetylenolpyruvoylglucosamine reductase (Anaplasma marginale (strain St. Maries)).